The primary structure comprises 1218 residues: Probable RNA-dependent RNA polymerase SHL2 (1218 aa).

This sequence belongs to the RdRP family.

It carries out the reaction RNA(n) + a ribonucleoside 5'-triphosphate = RNA(n+1) + diphosphate. Involved in the RNA silencing pathway. Probably required for the generation of small interfering RNAs (siRNAs). Regulates shoot apical meristem (SAM) initiation and maintenance and leaf polarization through the trans-acting siRNAS (ta-siRNAs) pathway which probably modulates the expression of the ARF2, ARF3, ARF4, ARF14 and ARF15 genes. In Oryza sativa subsp. japonica (Rice), this protein is Probable RNA-dependent RNA polymerase SHL2 (SHL2).